Consider the following 539-residue polypeptide: MQLTELSIKSQNKFVQHYIDGENMSSFFDYDIHSEDVWQKRLHDLSSQPFAREELADYLSSYHEKFHSAAMQASIEKLRDPKSAAVVGGQQAGLLTGPLYTIHKIISIIVLARQQEEALQIPVVPIFWVAGEDHDLEEINFVHTSTENKGPVKQKLPQSYWKKTSAAKTELDQEKCAAWIDEVFAAFEETDHTNTLLQNVKRCLRSSETFTDFFELLIADLFQEEGLILMNSGDPGIKKLETGMFQQILKHNHELAKAVSDQQRLMREAGYHPIIESDKDQANLFYEHEGERFLIEKENGVFVIKELDLKWTNDELHTHMEEKPECFSNNVVTRPLMQEFLIPTLAFIAGPGEINYWGELKRAFSLMGFRMTPVVPRLNITILERHIEKKLSERNIPLQEAIEHGTGHLKDTYFEEQIPEEFSSVMEQAKSQIEAVHKRARDEALKVDSSLEPLLQKNAAFIQDQLLFLERTVTKRIEEKEGFVLRDYERIQNSIRPLGAPQERIWNVMYYLNRYGPKFFTTFKHLPFSFQNQHQIVKL.

Positions 455-475 form a coiled coil; that stretch reads LQKNAAFIQDQLLFLERTVTK.

It belongs to the BshC family.

Functionally, involved in bacillithiol (BSH) biosynthesis. May catalyze the last step of the pathway, the addition of cysteine to glucosamine malate (GlcN-Mal) to generate BSH. The polypeptide is Putative cysteine ligase BshC (Bacillus velezensis (strain DSM 23117 / BGSC 10A6 / LMG 26770 / FZB42) (Bacillus amyloliquefaciens subsp. plantarum)).